The primary structure comprises 162 residues: Nucleotide-binding protein ACIAD3137 (162 aa).

It belongs to the YajQ family.

In terms of biological role, nucleotide-binding protein. This chain is Nucleotide-binding protein ACIAD3137, found in Acinetobacter baylyi (strain ATCC 33305 / BD413 / ADP1).